We begin with the raw amino-acid sequence, 313 residues long: Homoserine O-succinyltransferase (313 aa).

The Acyl-thioester intermediate role is filled by Cys142. The substrate site is built by Lys163 and Ser192. The active-site Proton acceptor is the His235. The active site involves Glu237. Arg249 lines the substrate pocket.

Belongs to the MetA family.

It is found in the cytoplasm. The enzyme catalyses L-homoserine + succinyl-CoA = O-succinyl-L-homoserine + CoA. Its pathway is amino-acid biosynthesis; L-methionine biosynthesis via de novo pathway; O-succinyl-L-homoserine from L-homoserine: step 1/1. Functionally, transfers a succinyl group from succinyl-CoA to L-homoserine, forming succinyl-L-homoserine. This Shewanella sp. (strain MR-4) protein is Homoserine O-succinyltransferase.